The sequence spans 70 residues: MKARELQELRKSSPQELQSKLNDLKAELFNLRFQLATGQLENPMRIREVKKSIAQIKTILREEEIRAYQQ.

This sequence belongs to the universal ribosomal protein uL29 family.

The polypeptide is Large ribosomal subunit protein uL29 (Clostridium botulinum (strain ATCC 19397 / Type A)).